Consider the following 579-residue polypeptide: Ribonucleoside-diphosphate reductase small chain (579 aa).

Fe cation contacts are provided by D130, E160, and H163. Residue Y167 is part of the active site. E225, E258, and H261 together coordinate Fe cation. The region spanning 435-579 is the Fido domain; sequence DMTWTLKDVH…VSVFVDQFYR (145 aa).

Belongs to the ribonucleoside diphosphate reductase small chain family. As to quaternary structure, heterotetramer composed of a homodimer of the large subunit (R1) and a homodimer of the small subunit (R2). Larger multisubunit protein complex are also active, composed of (R1)n(R2)n. It depends on Fe cation as a cofactor.

It carries out the reaction a 2'-deoxyribonucleoside 5'-diphosphate + [thioredoxin]-disulfide + H2O = a ribonucleoside 5'-diphosphate + [thioredoxin]-dithiol. Functionally, ribonucleoside-diphosphate reductase holoenzyme provides the precursors necessary for viral DNA synthesis. Allows virus growth in non-dividing cells. Catalyzes the biosynthesis of deoxyribonucleotides from the corresponding ribonucleotides. In Magallana gigas (Pacific oyster), this protein is Ribonucleoside-diphosphate reductase small chain.